The sequence spans 207 residues: Urease accessory protein UreG (207 aa).

13–20 (GPVGSGKT) contacts GTP.

It belongs to the SIMIBI class G3E GTPase family. UreG subfamily. In terms of assembly, homodimer. UreD, UreF and UreG form a complex that acts as a GTP-hydrolysis-dependent molecular chaperone, activating the urease apoprotein by helping to assemble the nickel containing metallocenter of UreC. The UreE protein probably delivers the nickel.

It is found in the cytoplasm. Functionally, facilitates the functional incorporation of the urease nickel metallocenter. This process requires GTP hydrolysis, probably effectuated by UreG. In Azoarcus sp. (strain BH72), this protein is Urease accessory protein UreG.